Consider the following 301-residue polypeptide: Sulfate adenylyltransferase subunit 2 (301 aa).

The interval 279-301 is disordered; the sequence is RQGRMIDHDSSGSMEEKKKQGYF.

Belongs to the PAPS reductase family. CysD subfamily. Heterodimer composed of CysD, the smaller subunit, and CysN.

It carries out the reaction sulfate + ATP + H(+) = adenosine 5'-phosphosulfate + diphosphate. The protein operates within sulfur metabolism; hydrogen sulfide biosynthesis; sulfite from sulfate: step 1/3. With CysN forms the ATP sulfurylase (ATPS) that catalyzes the adenylation of sulfate producing adenosine 5'-phosphosulfate (APS) and diphosphate, the first enzymatic step in sulfur assimilation pathway. APS synthesis involves the formation of a high-energy phosphoric-sulfuric acid anhydride bond driven by GTP hydrolysis by CysN coupled to ATP hydrolysis by CysD. The sequence is that of Sulfate adenylyltransferase subunit 2 from Marinomonas sp. (strain MWYL1).